Here is a 346-residue protein sequence, read N- to C-terminus: N(4)-(beta-N-acetylglucosaminyl)-L-asparaginase (346 aa).

The first 23 residues, 1-23, serve as a signal peptide directing secretion; the sequence is MARKSNLPVLLVPFLLCQALVRC. Ser24 bears the Blocked amino end (Ser) mark. An N-linked (GlcNAc...) asparagine glycan is attached at Asn38. 2 cysteine pairs are disulfide-bonded: Cys64–Cys69 and Cys163–Cys179. Catalysis depends on Thr206, which acts as the Nucleophile. Substrate is bound by residues 234–237 and 257–260; these read RVGD and TGNG. Cys286 and Cys306 are disulfide-bonded. Asn308 is a glycosylation site (N-linked (GlcNAc...) asparagine). Cys317 and Cys345 are disulfide-bonded.

Belongs to the Ntn-hydrolase family. As to quaternary structure, heterotetramer of two alpha and two beta chains arranged as a dimer of alpha/beta heterodimers. Cleaved into an alpha and beta chain by autocatalysis; this activates the enzyme. The N-terminal residue of the beta subunit is responsible for the nucleophile hydrolase activity. In terms of processing, N-glycosylated.

The protein resides in the lysosome. It catalyses the reaction N(4)-(beta-N-acetyl-D-glucosaminyl)-L-asparagine + H2O = N-acetyl-beta-D-glucosaminylamine + L-aspartate + H(+). Its function is as follows. Cleaves the GlcNAc-Asn bond which joins oligosaccharides to the peptide of asparagine-linked glycoproteins. In Homo sapiens (Human), this protein is N(4)-(beta-N-acetylglucosaminyl)-L-asparaginase (AGA).